Reading from the N-terminus, the 318-residue chain is uncharacterized protein (318 aa).

This is an uncharacterized protein from Schizosaccharomyces pombe (strain 972 / ATCC 24843) (Fission yeast).